We begin with the raw amino-acid sequence, 494 residues long: MSTGTFVVSQPLNYRGGARVEPVDASGTEKAFEPASGRVIATFTCSGEKEVNLAVQDAKAAFKIWSQKSGMERCRILLEAARIIRERRDEIATMETINNGKSIFEARWDIDTSWQCLEYYAGLAGSMAGEHIQLPGGSFGYTRREPLGVCVGIGAWNYPFQIACWKSAPALACGNAMVFKPSPFTPVSVLLLAEIYTEAGVPPGLFNVVQGGAATGQFLCQHRDVAKVSFTGSVPTGSKIMEMSAKGIKPVTLELGGKSPLIIFSDCDMKNAVKGALMANFLTQGEVCCNGTRVFVQKEILDQFTEEVVKQTQRIKIGDPLLEDTRMGPLINRPHLERVLGFVKVAKEQGAKVLCGGDVFVPEDPKLKDGYYMRPCVLTNCRDDMTCVKEEIFGPVMSILSFDTEAEVLERANDTTFGLAAGVFTRDIQRAHRVVAELQAGMCFINNYNVSPVELPFGGYKKSGFGRENGRVTIEYYSQLKTVCVEMGDVESAF.

The residue at position 2 (Ser-2) is an N-acetylserine. An N6-acetyllysine; alternate modification is found at Lys-30. An N6-succinyllysine; alternate modification is found at Lys-30. N6-succinyllysine is present on Lys-59. NAD(+) is bound by residues Lys-180 and Gly-232–Thr-236. The Proton acceptor role is filled by Glu-254. Cys-288 serves as the catalytic Nucleophile. N6-acetyllysine is present on residues Lys-298 and Lys-344. Residue Glu-391 coordinates NAD(+).

Belongs to the aldehyde dehydrogenase family. As to quaternary structure, homotetramer.

Its subcellular location is the cytoplasm. It localises to the cytosol. The catalysed reaction is 4-(trimethylamino)butanal + NAD(+) + H2O = 4-(trimethylamino)butanoate + NADH + 2 H(+). It carries out the reaction an aldehyde + NAD(+) + H2O = a carboxylate + NADH + 2 H(+). The enzyme catalyses 4-aminobutanal + NAD(+) + H2O = 4-aminobutanoate + NADH + 2 H(+). It catalyses the reaction formaldehyde + NAD(+) + H2O = formate + NADH + 2 H(+). The catalysed reaction is acetaldehyde + NAD(+) + H2O = acetate + NADH + 2 H(+). It carries out the reaction imidazole-4-acetaldehyde + NAD(+) + H2O = imidazole-4-acetate + NADH + 2 H(+). The enzyme catalyses acrolein + NAD(+) + H2O = acrylate + NADH + 2 H(+). It catalyses the reaction (5-hydroxyindol-3-yl)acetaldehyde + NAD(+) + H2O = (5-hydroxyindol-3-yl)acetate + NADH + 2 H(+). The catalysed reaction is 3,4-dihydroxyphenylacetaldehyde + NAD(+) + H2O = 3,4-dihydroxyphenylacetate + NADH + 2 H(+). It carries out the reaction spermine monoaldehyde + NAD(+) + H2O = N-(2-carboxyethyl)spermidine + NADH + 2 H(+). The enzyme catalyses propanal + NAD(+) + H2O = propanoate + NADH + 2 H(+). It catalyses the reaction butanal + NAD(+) + H2O = butanoate + NADH + 2 H(+). The catalysed reaction is pentanal + NAD(+) + H2O = pentanoate + NADH + 2 H(+). It carries out the reaction hexanal + NAD(+) + H2O = hexanoate + NADH + 2 H(+). It participates in amine and polyamine biosynthesis; carnitine biosynthesis. In terms of biological role, converts gamma-trimethylaminobutyraldehyde into gamma-butyrobetaine with high efficiency (in vitro). Can catalyze the irreversible oxidation of a broad range of aldehydes to the corresponding acids in an NAD-dependent reaction, but with low efficiency. Catalyzes the oxidation of aldehydes arising from biogenic amines and polyamines. This is 4-trimethylaminobutyraldehyde dehydrogenase (ALDH9A1) from Bos taurus (Bovine).